The chain runs to 323 residues: Aspartate carbamoyltransferase catalytic subunit (323 aa).

The carbamoyl phosphate site is built by R71 and T72. K99 contributes to the L-aspartate binding site. Residues R121, H151, and Q154 each contribute to the carbamoyl phosphate site. Residues R184 and R239 each coordinate L-aspartate. Carbamoyl phosphate-binding residues include G280 and P281.

It belongs to the aspartate/ornithine carbamoyltransferase superfamily. ATCase family. As to quaternary structure, heterododecamer (2C3:3R2) of six catalytic PyrB chains organized as two trimers (C3), and six regulatory PyrI chains organized as three dimers (R2).

It carries out the reaction carbamoyl phosphate + L-aspartate = N-carbamoyl-L-aspartate + phosphate + H(+). It functions in the pathway pyrimidine metabolism; UMP biosynthesis via de novo pathway; (S)-dihydroorotate from bicarbonate: step 2/3. Its function is as follows. Catalyzes the condensation of carbamoyl phosphate and aspartate to form carbamoyl aspartate and inorganic phosphate, the committed step in the de novo pyrimidine nucleotide biosynthesis pathway. The chain is Aspartate carbamoyltransferase catalytic subunit from Ralstonia nicotianae (strain ATCC BAA-1114 / GMI1000) (Ralstonia solanacearum).